A 305-amino-acid chain; its full sequence is Superkiller complex protein 8 (305 aa).

WD repeat units lie at residues 14–57 (AHED…LEMQ), 62–101 (GHQLGVVSVDVSPSGNIMASSSLDAHIRLWDLESGKQIRS), 104–143 (AGPVDAWSVAFSPDSQHLATGSHVGKVNIFGVETGKKEYS), 146–187 (TRGK…HTLE), 188–227 (GHAMPIRSLTFSTDSQLLVTASDDGYIKIYDVQHASLAAT), 230–269 (GHGSWVLNVAFSPDDAHFVSSSSDKSVKVWDVSARTCVHT), and 272–305 (DHQDQVWGVKYNRNGSKIVSVGDDQEIHVYDCPI).

This sequence belongs to the SKI8 family. As to quaternary structure, component of the PAF1 complex. Component of the SKI complex.

Its subcellular location is the nucleus. The protein resides in the cytoplasm. Functionally, component of the PAF1 complex (PAF1C) which has multiple functions during transcription by RNA polymerase II and is implicated in regulation of development and maintenance of embryonic stem cell pluripotency. PAF1C associates with RNA polymerase II through interaction with POLR2A CTD non-phosphorylated and 'Ser-2'- and 'Ser-5'-phosphorylated forms and is involved in transcriptional elongation, acting both independently and synergistically with TCEA1 and in cooperation with the DSIF complex and HTATSF1. Also acts as a component of the SKI complex, a multiprotein complex that assists the RNA-degrading exosome during the mRNA decay and quality-control pathways. The SKI complex catalyzes mRNA extraction from 80S ribosomal complexes in the 3'-5' direction and channels mRNA to the cytosolic exosome for degradation. This Xenopus laevis (African clawed frog) protein is Superkiller complex protein 8 (skic8).